A 755-amino-acid chain; its full sequence is Ribosome biogenesis protein BOP1 (755 aa).

Polar residues-rich tracts occupy residues 1 to 10 and 43 to 61; these read MSQEPSSSFS and ELSS…TEPN. The interval 1-65 is disordered; the sequence is MSQEPSSSFS…PLTEPNNIPI (65 aa). The interval 309-754 is interaction with EB1; sequence MDSMLPTLPN…SGTDGVLRLF (446 aa). The stretch at 335 to 374 is one WD 1 repeat; sequence TGTRRINGLTFSPKGMFFAVGGRDCILRVFETYSGRQVRA. Residues 482–505 are disordered; sequence YNEGSEDDDAAESARFNEERHQRG. The segment covering 496 to 505 has biased composition (basic and acidic residues); it reads RFNEERHQRG. WD repeat units lie at residues 617 to 655, 659 to 698, and 725 to 755; these read PGVK…EPTA, YHTS…LVKM, and DGSV…RLFK.

This sequence belongs to the WD repeat BOP1/ERB1 family. As to quaternary structure, interacts (via C-terminal WD repeats) with giardin subunit beta. Interacts (via C-terminal WD repeats) with EB1.

It is found in the nucleus. It localises to the nucleolus. The protein localises to the nucleus membrane. Functionally, required for maturation of ribosomal RNAs and formation of the large ribosomal subunit. The chain is Ribosome biogenesis protein BOP1 from Giardia intestinalis (Giardia lamblia).